Here is a 232-residue protein sequence, read N- to C-terminus: uncharacterized protein (232 aa).

The disordered stretch occupies residues Asp119 to Gly145. A compositionally biased stretch (basic and acidic residues) spans Arg123–Ala133.

This is an uncharacterized protein from Encephalitozoon cuniculi (strain GB-M1) (Microsporidian parasite).